The following is a 421-amino-acid chain: Probable sugar-binding periplasmic protein (421 aa).

Residues 1-27 (MHKLLKLAAMGTAACALLAGMAPVANA) form the signal peptide.

It belongs to the bacterial solute-binding protein 1 family.

It localises to the periplasm. Functionally, part of a binding-protein-dependent transport system for a sugar. This is Probable sugar-binding periplasmic protein from Brucella suis biovar 1 (strain 1330).